Reading from the N-terminus, the 664-residue chain is UvrABC system protein B (664 aa).

The Helicase ATP-binding domain occupies 23 to 412 (EGLNRGMRFQ…VVEQIIRPTG (390 aa)). 36-43 (GVTGSGKT) is an ATP binding site. Residues 89 to 112 (YYDYYQPEAYIPTKDLYIEKNADI) carry the Beta-hairpin motif. Residues 429 to 588 (DLVNEIVKVK…ITPRSVIKPL (160 aa)) form the Helicase C-terminal domain. A UVR domain is found at 622–657 (EEYMAVLEEEMYRAASELRYEDAAALRDELFRIREE).

It belongs to the UvrB family. Forms a heterotetramer with UvrA during the search for lesions. Interacts with UvrC in an incision complex.

The protein resides in the cytoplasm. The UvrABC repair system catalyzes the recognition and processing of DNA lesions. A damage recognition complex composed of 2 UvrA and 2 UvrB subunits scans DNA for abnormalities. Upon binding of the UvrA(2)B(2) complex to a putative damaged site, the DNA wraps around one UvrB monomer. DNA wrap is dependent on ATP binding by UvrB and probably causes local melting of the DNA helix, facilitating insertion of UvrB beta-hairpin between the DNA strands. Then UvrB probes one DNA strand for the presence of a lesion. If a lesion is found the UvrA subunits dissociate and the UvrB-DNA preincision complex is formed. This complex is subsequently bound by UvrC and the second UvrB is released. If no lesion is found, the DNA wraps around the other UvrB subunit that will check the other stand for damage. In Thermotoga maritima (strain ATCC 43589 / DSM 3109 / JCM 10099 / NBRC 100826 / MSB8), this protein is UvrABC system protein B.